The following is a 179-amino-acid chain: uncharacterized protein (179 aa).

3 consecutive transmembrane segments (helical) span residues 29–49 (LLGI…GPLI), 76–96 (AKHM…DAYS), and 97–117 (GAII…LLWA).

This sequence belongs to the DP1 family.

The protein localises to the membrane. This is an uncharacterized protein from Encephalitozoon cuniculi (strain GB-M1) (Microsporidian parasite).